The sequence spans 485 residues: Ribulose bisphosphate carboxylase large chain (485 aa).

Residues Asn-124 and Thr-174 each coordinate substrate. Residue Lys-176 is the Proton acceptor of the active site. Substrate is bound at residue Lys-178. 3 residues coordinate Mg(2+): Lys-202, Asp-204, and Glu-205. Lys-202 is modified (N6-carboxylysine). The Proton acceptor role is filled by His-294. Residues Arg-295, His-327, and Ser-379 each coordinate substrate.

It belongs to the RuBisCO large chain family. Type I subfamily. Heterohexadecamer of 8 large chains and 8 small chains. Requires Mg(2+) as cofactor.

The catalysed reaction is 2 (2R)-3-phosphoglycerate + 2 H(+) = D-ribulose 1,5-bisphosphate + CO2 + H2O. It carries out the reaction D-ribulose 1,5-bisphosphate + O2 = 2-phosphoglycolate + (2R)-3-phosphoglycerate + 2 H(+). Its function is as follows. RuBisCO catalyzes two reactions: the carboxylation of D-ribulose 1,5-bisphosphate, the primary event in carbon dioxide fixation, as well as the oxidative fragmentation of the pentose substrate. Both reactions occur simultaneously and in competition at the same active site. The protein is Ribulose bisphosphate carboxylase large chain of Rhodopseudomonas palustris (strain BisA53).